We begin with the raw amino-acid sequence, 526 residues long: Trigger factor (526 aa).

Positions 162-243 (GDFVSIDLSA…LGSVKERELP (82 aa)) constitute a PPIase FKBP-type domain. Positions 425–460 (DTDGADVDPKEYFGDVEAEGDKADKAETDKAEEKPK) are enriched in basic and acidic residues. The segment at 425 to 526 (DTDGADVDPK…AKKAAEKKED (102 aa)) is disordered. Basic residues predominate over residues 461-517 (KAPAKKSTTKKSTAKKSTAKKSTAKKSTAKKSTAKKSTTKKATKSTAKKSTAKKTTA).

It belongs to the FKBP-type PPIase family. Tig subfamily.

It is found in the cytoplasm. The catalysed reaction is [protein]-peptidylproline (omega=180) = [protein]-peptidylproline (omega=0). Its function is as follows. Involved in protein export. Acts as a chaperone by maintaining the newly synthesized protein in an open conformation. Functions as a peptidyl-prolyl cis-trans isomerase. The protein is Trigger factor of Corynebacterium jeikeium (strain K411).